The primary structure comprises 48 residues: Large ribosomal subunit protein eL40 (48 aa).

It belongs to the eukaryotic ribosomal protein eL40 family.

This chain is Large ribosomal subunit protein eL40, found in Methanoculleus marisnigri (strain ATCC 35101 / DSM 1498 / JR1).